The chain runs to 382 residues: Secreted RxLR effector protein 118 (382 aa).

A signal peptide spans 1–21 (MRGAYYVTIALLVVASSQISA). A RxLR-dEER motif is present at residues 48 to 65 (RSLRGSRDVSNDVAIEER). A disordered region spans residues 308-382 (MNKASTSKGK…AVTSLSSISN (75 aa)). A compositionally biased stretch (polar residues) spans 310–323 (KASTSKGKSSVFTR).

The protein belongs to the RxLR effector family.

It localises to the secreted. Its subcellular location is the host nucleus. Secreted effector that completely suppresses the host cell death induced by cell death-inducing proteins. The chain is Secreted RxLR effector protein 118 from Plasmopara viticola (Downy mildew of grapevine).